A 282-amino-acid polypeptide reads, in one-letter code: Elongation factor Ts (282 aa).

Residues 80–83 form an involved in Mg(2+) ion dislocation from EF-Tu region; sequence TDFV.

Belongs to the EF-Ts family.

It localises to the cytoplasm. Functionally, associates with the EF-Tu.GDP complex and induces the exchange of GDP to GTP. It remains bound to the aminoacyl-tRNA.EF-Tu.GTP complex up to the GTP hydrolysis stage on the ribosome. In Pasteurella multocida (strain Pm70), this protein is Elongation factor Ts (tsf).